We begin with the raw amino-acid sequence, 630 residues long: 1-deoxy-D-xylulose-5-phosphate synthase (630 aa).

Thiamine diphosphate-binding positions include H73 and 114-116; that span reads SHA. D146 is a Mg(2+) binding site. Thiamine diphosphate contacts are provided by residues 147–148, N176, F287, and E371; that span reads GA. N176 contributes to the Mg(2+) binding site.

Belongs to the transketolase family. DXPS subfamily. In terms of assembly, homodimer. Mg(2+) is required as a cofactor. Requires thiamine diphosphate as cofactor.

The enzyme catalyses D-glyceraldehyde 3-phosphate + pyruvate + H(+) = 1-deoxy-D-xylulose 5-phosphate + CO2. It participates in metabolic intermediate biosynthesis; 1-deoxy-D-xylulose 5-phosphate biosynthesis; 1-deoxy-D-xylulose 5-phosphate from D-glyceraldehyde 3-phosphate and pyruvate: step 1/1. Its function is as follows. Catalyzes the acyloin condensation reaction between C atoms 2 and 3 of pyruvate and glyceraldehyde 3-phosphate to yield 1-deoxy-D-xylulose-5-phosphate (DXP). This is 1-deoxy-D-xylulose-5-phosphate synthase from Corynebacterium jeikeium (strain K411).